A 173-amino-acid chain; its full sequence is YGVPEEPPPVPDTCGHVAEERVTQAFAELTTKLSELQENVTNTFHGCNHCPNGWVTSENKCFHVPLEKASWMVAHGVCARLDSRARLASIDAADQAVVEPLSSEKMWIGLSYDSANDAAVWADDSHSSHRNWYATQPDDESELCVLIKEDQYRQWHDYNCNDRYNFVCEIVLH.

N39 is a glycosylation site (N-linked (GlcNAc...) asparagine). Cystine bridges form between C47–C61, C78–C168, and C144–C160. Residues 51 to 170 enclose the C-type lectin domain; the sequence is PNGWVTSENK…NDRYNFVCEI (120 aa).

In terms of assembly, homohexamer; disulfide-linked. As to expression, coelemic fluid.

Sugar-binding protein which recognizes specific carbohydrate structures and agglutinates a variety of animal cells by binding to cell-surface glycoproteins and glycolipids. Calcium-dependent lectin. Invertebrate lectins may be involved in defense functions. The polypeptide is Lectin BRA-2 (Megabalanus rosa (Acorn barnacle)).